The sequence spans 684 residues: Protein real-time (684 aa).

In terms of domain architecture, PRELI/MSF1 spans V2–I178. The region spanning T297–D474 is the CRAL-TRIO domain. The 148-residue stretch at H537–R684 folds into the GOLD domain.

The protein localises to the mitochondrion. The polypeptide is Protein real-time (Anopheles gambiae (African malaria mosquito)).